An 866-amino-acid polypeptide reads, in one-letter code: Translation initiation factor IF-2 (866 aa).

Disordered regions lie at residues Met-1–Gln-63 and Val-92–Ser-257. Over residues Glu-26 to His-36 the composition is skewed to polar residues. The segment covering Val-92–Arg-135 has biased composition (basic and acidic residues). 2 stretches are compositionally biased toward low complexity: residues Val-152–Gln-164 and Pro-179–Pro-197. A tr-type G domain is found at Ser-365 to Asp-533. The segment at Gly-374 to Thr-381 is G1. Residue Gly-374–Thr-381 participates in GTP binding. Positions Gly-399–His-403 are G2. The interval Asp-421–Gly-424 is G3. Residues Asp-421–His-425 and Asn-475–Asp-478 contribute to the GTP site. The interval Asn-475 to Asp-478 is G4. The interval Ser-511–Lys-513 is G5.

Belongs to the TRAFAC class translation factor GTPase superfamily. Classic translation factor GTPase family. IF-2 subfamily.

It localises to the cytoplasm. Its function is as follows. One of the essential components for the initiation of protein synthesis. Protects formylmethionyl-tRNA from spontaneous hydrolysis and promotes its binding to the 30S ribosomal subunits. Also involved in the hydrolysis of GTP during the formation of the 70S ribosomal complex. This is Translation initiation factor IF-2 from Rhodospirillum rubrum (strain ATCC 11170 / ATH 1.1.1 / DSM 467 / LMG 4362 / NCIMB 8255 / S1).